A 303-amino-acid polypeptide reads, in one-letter code: Probable cell division protein WhiA (303 aa).

Residues 272 to 303 constitute a DNA-binding region (H-T-H motif); it reads SIQQVADALEFPITKSGVNHRLRKINKIADDL.

The protein belongs to the WhiA family.

Functionally, involved in cell division and chromosome segregation. In Streptococcus pyogenes serotype M12 (strain MGAS2096), this protein is Probable cell division protein WhiA.